The sequence spans 212 residues: Adenylate kinase (212 aa).

Position 10–15 (10–15 (GAGKGT)) interacts with ATP. Positions 30-59 (AIGDIFRTIIKTSTSEAELINNYVKQGELI) are NMP. AMP-binding positions include R36, 57 to 59 (ELI), 85 to 88 (GYPR), and Q92. Residues 122–160 (GRYSCKNCGKIYNRYFVQPKTDNVCDVCGSSTFDYRKDD) are LID. Residue R123 coordinates ATP. Zn(2+) contacts are provided by C126 and C129. 132–133 (IY) is an ATP binding site. Zn(2+)-binding residues include C146 and C149. Positions 157 and 168 each coordinate AMP. K196 lines the ATP pocket.

It belongs to the adenylate kinase family. As to quaternary structure, monomer.

Its subcellular location is the cytoplasm. It catalyses the reaction AMP + ATP = 2 ADP. Its pathway is purine metabolism; AMP biosynthesis via salvage pathway; AMP from ADP: step 1/1. In terms of biological role, catalyzes the reversible transfer of the terminal phosphate group between ATP and AMP. Plays an important role in cellular energy homeostasis and in adenine nucleotide metabolism. This chain is Adenylate kinase, found in Rickettsia conorii (strain ATCC VR-613 / Malish 7).